A 369-amino-acid polypeptide reads, in one-letter code: tRNA 2-selenouridine synthase (369 aa).

Residues Phe12–Arg136 enclose the Rhodanese domain. Residue Cys95 is the S-selanylcysteine intermediate of the active site.

It belongs to the SelU family. Monomer.

It catalyses the reaction 5-methylaminomethyl-2-thiouridine(34) in tRNA + selenophosphate + (2E)-geranyl diphosphate + H2O + H(+) = 5-methylaminomethyl-2-selenouridine(34) in tRNA + (2E)-thiogeraniol + phosphate + diphosphate. It carries out the reaction 5-methylaminomethyl-2-thiouridine(34) in tRNA + (2E)-geranyl diphosphate = 5-methylaminomethyl-S-(2E)-geranyl-thiouridine(34) in tRNA + diphosphate. The enzyme catalyses 5-methylaminomethyl-S-(2E)-geranyl-thiouridine(34) in tRNA + selenophosphate + H(+) = 5-methylaminomethyl-2-(Se-phospho)selenouridine(34) in tRNA + (2E)-thiogeraniol. The catalysed reaction is 5-methylaminomethyl-2-(Se-phospho)selenouridine(34) in tRNA + H2O = 5-methylaminomethyl-2-selenouridine(34) in tRNA + phosphate. Functionally, involved in the post-transcriptional modification of the uridine at the wobble position (U34) of tRNA(Lys), tRNA(Glu) and tRNA(Gln). Catalyzes the conversion of 2-thiouridine (S2U-RNA) to 2-selenouridine (Se2U-RNA). Acts in a two-step process involving geranylation of 2-thiouridine (S2U) to S-geranyl-2-thiouridine (geS2U) and subsequent selenation of the latter derivative to 2-selenouridine (Se2U) in the tRNA chain. The polypeptide is tRNA 2-selenouridine synthase (Pseudomonas aeruginosa (strain LESB58)).